We begin with the raw amino-acid sequence, 121 residues long: Large ribosomal subunit protein uL14 (121 aa).

This sequence belongs to the universal ribosomal protein uL14 family. In terms of assembly, part of the 50S ribosomal subunit. Forms a cluster with proteins L3 and L19. In the 70S ribosome, L14 and L19 interact and together make contacts with the 16S rRNA in bridges B5 and B8.

In terms of biological role, binds to 23S rRNA. Forms part of two intersubunit bridges in the 70S ribosome. The polypeptide is Large ribosomal subunit protein uL14 (Synechococcus sp. (strain CC9902)).